The following is a 1165-amino-acid chain: Peroxisomal ATPase PEX6 (1165 aa).

The protein belongs to the AAA ATPase family. As to quaternary structure, interacts with PEX1; forming the PEX1-PEX6 AAA ATPase complex, which is composed of a heterohexamer formed by a trimer of PEX1-PEX6 dimers.

It localises to the membrane. It carries out the reaction ATP + H2O = ADP + phosphate + H(+). Functionally, component of the PEX1-PEX6 AAA ATPase complex involved in peroxisome biosynthesis. The complex acts as a protein dislocase complex that mediates the ATP-dependent extraction of the PEX5 receptor from peroxisomal membranes, an essential step for PEX5 recycling. Specifically recognizes PEX5 monoubiquitinated at 'Cys-6', and pulls it out of the peroxisome lumen through the PEX2-PEX10-PEX12 retrotranslocation channel. Extraction by the PEX1-PEX6 AAA ATPase complex is accompanied by unfolding of the TPR repeats and release of bound cargo from PEX5. This is Peroxisomal ATPase PEX6 from Komagataella pastoris (Yeast).